Here is a 280-residue protein sequence, read N- to C-terminus: Protein FLOURY 1-like (280 aa).

The chain crosses the membrane as a helical span at residues 22–42 (GFGFGIFVIGCSSQFFNLVFL). The tract at residues 153–187 (VALSETELDEKNHHGEEEESEDEEESQSQNDEDQL) is disordered. The span at 169 to 187 (EEESEDEEESQSQNDEDQL) shows a compositional bias: acidic residues. One can recognise a GTD-binding domain in the interval 188 to 280 (LDVITLRTMV…LDDDEDKIQM (93 aa)).

It localises to the membrane. The sequence is that of Protein FLOURY 1-like from Arabidopsis thaliana (Mouse-ear cress).